The primary structure comprises 868 residues: Leucine--tRNA ligase (868 aa).

The 'HIGH' region motif lies at 42–52; the sequence is PYPSGKLHMGH. Positions 627–631 match the 'KMSKS' region motif; the sequence is KMSKS. An ATP-binding site is contributed by Lys-630.

This sequence belongs to the class-I aminoacyl-tRNA synthetase family.

It is found in the cytoplasm. It carries out the reaction tRNA(Leu) + L-leucine + ATP = L-leucyl-tRNA(Leu) + AMP + diphosphate. The sequence is that of Leucine--tRNA ligase from Pseudomonas syringae pv. tomato (strain ATCC BAA-871 / DC3000).